A 161-amino-acid polypeptide reads, in one-letter code: Phosphopantetheine adenylyltransferase (161 aa).

S10 is a substrate binding site. ATP contacts are provided by residues 10–11 (SF) and H18. K42, L74, and R88 together coordinate substrate. ATP is bound by residues 88–89 (RG), E99, and 124–130 (YSFLSSS).

This sequence belongs to the bacterial CoaD family. As to quaternary structure, homohexamer. It depends on Mg(2+) as a cofactor.

It localises to the cytoplasm. It carries out the reaction (R)-4'-phosphopantetheine + ATP + H(+) = 3'-dephospho-CoA + diphosphate. It participates in cofactor biosynthesis; coenzyme A biosynthesis; CoA from (R)-pantothenate: step 4/5. Functionally, reversibly transfers an adenylyl group from ATP to 4'-phosphopantetheine, yielding dephospho-CoA (dPCoA) and pyrophosphate. The chain is Phosphopantetheine adenylyltransferase from Bacillus subtilis (strain 168).